A 198-amino-acid polypeptide reads, in one-letter code: UPF0215 protein NEQ431 (198 aa).

The segment at 179–198 (TKGDSSKPRAGGDSNPGPAG) is disordered.

Belongs to the UPF0215 family.

The polypeptide is UPF0215 protein NEQ431 (Nanoarchaeum equitans (strain Kin4-M)).